The following is a 642-amino-acid chain: Threonine--tRNA ligase (642 aa).

One can recognise a TGS domain in the interval 1 to 61; it reads MPVITLPDGS…DTDAQLAIIT (61 aa). A catalytic region spans residues 243 to 534; sequence DHRKIGKQLD…LTEEFAGFFP (292 aa). The Zn(2+) site is built by cysteine 334, histidine 385, and histidine 511.

The protein belongs to the class-II aminoacyl-tRNA synthetase family. In terms of assembly, homodimer. It depends on Zn(2+) as a cofactor.

It is found in the cytoplasm. It carries out the reaction tRNA(Thr) + L-threonine + ATP = L-threonyl-tRNA(Thr) + AMP + diphosphate + H(+). In terms of biological role, catalyzes the attachment of threonine to tRNA(Thr) in a two-step reaction: L-threonine is first activated by ATP to form Thr-AMP and then transferred to the acceptor end of tRNA(Thr). Also edits incorrectly charged L-seryl-tRNA(Thr). The polypeptide is Threonine--tRNA ligase (Pectobacterium atrosepticum (strain SCRI 1043 / ATCC BAA-672) (Erwinia carotovora subsp. atroseptica)).